The sequence spans 107 residues: Wound-induced proteinase inhibitor 1 (107 aa).

An N-terminal signal peptide occupies residues 1 to 23; the sequence is MESKFAHIIVFFLLATSFETLLA. Residues 24–36 constitute a propeptide that is removed on maturation; that stretch reads RKESDGPEVIELQ.

Belongs to the protease inhibitor I13 (potato type I serine protease inhibitor) family. As to quaternary structure, heterogeneous tetramers of similar chains.

In terms of biological role, inhibits both chymotrypsin and trypsin. The sequence is that of Wound-induced proteinase inhibitor 1 from Solanum tuberosum (Potato).